Reading from the N-terminus, the 128-residue chain is Sulfurtransferase TusD (128 aa).

The Cysteine persulfide intermediate role is filled by Cys-78.

This sequence belongs to the DsrE/TusD family. In terms of assembly, heterohexamer, formed by a dimer of trimers. The hexameric TusBCD complex contains 2 copies each of TusB, TusC and TusD. The TusBCD complex interacts with TusE.

Its subcellular location is the cytoplasm. Part of a sulfur-relay system required for 2-thiolation of 5-methylaminomethyl-2-thiouridine (mnm(5)s(2)U) at tRNA wobble positions. Accepts sulfur from TusA and transfers it in turn to TusE. The protein is Sulfurtransferase TusD of Salmonella agona (strain SL483).